Here is a 160-residue protein sequence, read N- to C-terminus: SsrA-binding protein (160 aa).

Positions 132–160 (KIHDKRDDMQKKDAQQEIARALKSSNRYE) are disordered. A compositionally biased stretch (basic and acidic residues) spans 135–146 (DKRDDMQKKDAQ).

Belongs to the SmpB family.

It is found in the cytoplasm. Required for rescue of stalled ribosomes mediated by trans-translation. Binds to transfer-messenger RNA (tmRNA), required for stable association of tmRNA with ribosomes. tmRNA and SmpB together mimic tRNA shape, replacing the anticodon stem-loop with SmpB. tmRNA is encoded by the ssrA gene; the 2 termini fold to resemble tRNA(Ala) and it encodes a 'tag peptide', a short internal open reading frame. During trans-translation Ala-aminoacylated tmRNA acts like a tRNA, entering the A-site of stalled ribosomes, displacing the stalled mRNA. The ribosome then switches to translate the ORF on the tmRNA; the nascent peptide is terminated with the 'tag peptide' encoded by the tmRNA and targeted for degradation. The ribosome is freed to recommence translation, which seems to be the essential function of trans-translation. The sequence is that of SsrA-binding protein from Leptospira borgpetersenii serovar Hardjo-bovis (strain JB197).